A 510-amino-acid polypeptide reads, in one-letter code: NAD(P)H-quinone oxidoreductase subunit 2 B, chloroplastic (510 aa).

A run of 13 helical transmembrane segments spans residues 24–44 (LLLF…GLIL), 57–77 (IPWL…ALLF), 99–119 (IFQF…VEYI), 124–144 (MAIT…MFLC), 150–170 (ITIF…SGYT), 183–203 (YLLM…WLYG), 229–249 (ISIA…PAPF), 295–315 (WHLL…LIAI), 323–343 (MLAY…IVGD), 354–374 (YMLF…LFGL), 395–415 (ALSS…AGFF), 418–438 (LHLF…IGLL), and 484–504 (MIVC…IIAI).

Belongs to the complex I subunit 2 family. As to quaternary structure, NDH is composed of at least 16 different subunits, 5 of which are encoded in the nucleus.

It is found in the plastid. The protein resides in the chloroplast thylakoid membrane. The catalysed reaction is a plastoquinone + NADH + (n+1) H(+)(in) = a plastoquinol + NAD(+) + n H(+)(out). It catalyses the reaction a plastoquinone + NADPH + (n+1) H(+)(in) = a plastoquinol + NADP(+) + n H(+)(out). NDH shuttles electrons from NAD(P)H:plastoquinone, via FMN and iron-sulfur (Fe-S) centers, to quinones in the photosynthetic chain and possibly in a chloroplast respiratory chain. The immediate electron acceptor for the enzyme in this species is believed to be plastoquinone. Couples the redox reaction to proton translocation, and thus conserves the redox energy in a proton gradient. This is NAD(P)H-quinone oxidoreductase subunit 2 B, chloroplastic from Drimys granadensis.